Reading from the N-terminus, the 181-residue chain is Large ribosomal subunit protein uL5 (181 aa).

It belongs to the universal ribosomal protein uL5 family. In terms of assembly, part of the 50S ribosomal subunit; part of the 5S rRNA/L5/L18/L25 subcomplex. Contacts the 5S rRNA and the P site tRNA. Forms a bridge to the 30S subunit in the 70S ribosome.

Its function is as follows. This is one of the proteins that bind and probably mediate the attachment of the 5S RNA into the large ribosomal subunit, where it forms part of the central protuberance. In the 70S ribosome it contacts protein S13 of the 30S subunit (bridge B1b), connecting the 2 subunits; this bridge is implicated in subunit movement. Contacts the P site tRNA; the 5S rRNA and some of its associated proteins might help stabilize positioning of ribosome-bound tRNAs. The chain is Large ribosomal subunit protein uL5 from Campylobacter jejuni subsp. jejuni serotype O:6 (strain 81116 / NCTC 11828).